Consider the following 293-residue polypeptide: NAD kinase (293 aa).

The Proton acceptor role is filled by aspartate 74. Residues aspartate 74–glycine 75, asparagine 148–glutamate 149, histidine 159, arginine 176, aspartate 178, threonine 186, threonine 189–serine 194, and glutamine 248 each bind NAD(+).

The protein belongs to the NAD kinase family. Homodimer. Requires a divalent metal cation as cofactor.

It is found in the cytoplasm. It carries out the reaction NAD(+) + ATP = ADP + NADP(+) + H(+). Involved in the regulation of the intracellular balance of NAD and NADP, and is a key enzyme in the biosynthesis of NADP. Catalyzes specifically the phosphorylation on 2'-hydroxyl of the adenosine moiety of NAD to yield NADP. In Yersinia pestis, this protein is NAD kinase.